A 67-amino-acid polypeptide reads, in one-letter code: Small ribosomal subunit protein bS21 (67 aa).

The protein belongs to the bacterial ribosomal protein bS21 family.

The chain is Small ribosomal subunit protein bS21 from Hydrogenobaculum sp. (strain Y04AAS1).